The following is a 137-amino-acid chain: Profilin-3 (137 aa).

The protein belongs to the profilin family. As to quaternary structure, interacts with ACTRT3. In terms of tissue distribution, testis specific.

Its subcellular location is the cytoplasm. The protein resides in the cytoskeleton. The protein localises to the nucleus. In terms of biological role, binds to actin and affects the structure of the cytoskeleton. Slightly reduces actin polymerization. Binds to poly-L-proline, phosphatidylinositol 3-phosphate (PtdIns(3)P), phosphatidylinositol 4,5-bisphosphate (PtdIns(4,5)P2) and phosphatidylinositol 4-phosphate (PtdIns(4)P). May be involved in spermatogenesis. In Homo sapiens (Human), this protein is Profilin-3 (PFN3).